A 475-amino-acid chain; its full sequence is Stromelysin-1 (475 aa).

Positions 1 to 17 are cleaved as a signal peptide; it reads MKGLPVLLWLCTAVCSS. Residues 18 to 97 constitute a propeptide, activation peptide; sequence YPLHGSEEDA…PRCGVPDVGG (80 aa). The Cysteine switch signature appears at 88–95; it reads PRCGVPDV. Cysteine 90 contacts Zn(2+). Asparagine 118 carries an N-linked (GlcNAc...) asparagine glycan. Positions 122 and 156 each coordinate Ca(2+). Zn(2+) contacts are provided by histidine 166 and aspartate 168. Aspartate 173, glycine 174, glycine 176, and valine 178 together coordinate Ca(2+). Histidine 181 provides a ligand contact to Zn(2+). Residues glycine 188, asparagine 190, and aspartate 192 each contribute to the Ca(2+) site. Histidine 194 is a binding site for Zn(2+). 3 residues coordinate Ca(2+): aspartate 196, aspartate 197, and glutamate 199. Residue histidine 216 coordinates Zn(2+). Glutamate 217 is a catalytic residue. Zn(2+) is bound by residues histidine 220 and histidine 226. Hemopexin repeat units lie at residues 285 to 334, 335 to 381, 383 to 431, and 432 to 475; these read LPMC…WPSL, PSNM…GLPE, VQKI…FPGI, and GTKV…WFNC. Cysteine 288 and cysteine 475 are disulfide-bonded. Aspartate 295 is a Ca(2+) binding site. Ca(2+) contacts are provided by aspartate 387 and aspartate 436.

This sequence belongs to the peptidase M10A family. Ca(2+) serves as cofactor. It depends on Zn(2+) as a cofactor.

Its subcellular location is the secreted. It is found in the extracellular space. The protein localises to the extracellular matrix. The enzyme catalyses Preferential cleavage where P1', P2' and P3' are hydrophobic residues.. Its activity is regulated as follows. Inhibited by a synthetic peptide corresponding to the inhibitory cysteine switch motif. Inhibited by ethylenediaminetetraacetic acid (EDTA), 1,10-pheanthroline, 2-mecaptoethanol, dithiothreitol and metalloproteinase inhibitor protein TIMP. Its function is as follows. Can degrade fibronectin, laminin, gelatins of type I, III, IV, and V; collagens III, IV, X, and IX, and cartilage proteoglycans. Activates procollagenase. Functionally, metalloproteinase with a rather broad substrate specificity that can degrade fibronectin, laminin, gelatins of type I, III, IV, and V; collagens III, IV, X, and IX, and cartilage proteoglycans. Activates different molecules including growth factors, plasminogen or other matrix metalloproteinases such as MMP9. Once released into the extracellular matrix (ECM), the inactive pro-enzyme is activated by the plasmin cascade signaling pathway. Also acts intracellularly. For example, in dopaminergic neurons, gets activated by the serine protease HTRA2 upon stress and plays a pivotal role in DA neuronal degeneration by mediating microglial activation and alpha-synuclein/SNCA cleavage. In addition, plays a role in immune response and possesses antiviral activity against various viruses. Mechanistically, translocates from the cytoplasm into the cell nucleus upon virus infection to influence NF-kappa-B activities. This chain is Stromelysin-1 (Mmp3), found in Rattus norvegicus (Rat).